The primary structure comprises 264 residues: Hemin import ATP-binding protein HmuV (264 aa).

The region spanning 2–241 (IEVSGLSVRL…ATMLSVFGCA (240 aa)) is the ABC transporter domain. 34–41 (GPNGSGKT) contacts ATP.

It belongs to the ABC transporter superfamily. Heme (hemin) importer (TC 3.A.1.14.5) family. In terms of assembly, the complex is composed of two ATP-binding proteins (HmuV), two transmembrane proteins (HmuU) and a solute-binding protein (HmuT).

It is found in the cell inner membrane. In terms of biological role, part of the ABC transporter complex HmuTUV involved in hemin import. Responsible for energy coupling to the transport system. In Rhizobium etli (strain ATCC 51251 / DSM 11541 / JCM 21823 / NBRC 15573 / CFN 42), this protein is Hemin import ATP-binding protein HmuV.